Here is a 493-residue protein sequence, read N- to C-terminus: Transcript termination protein A18 (493 aa).

The Helicase ATP-binding domain occupies 100–256 (MIELKRPLYI…NSIINIAKLS (157 aa)). Residue 113 to 120 (LACGFGKT) participates in ATP binding. The DESH box signature appears at 206 to 209 (DESH).

Belongs to the helicase family. Poxviruses subfamily. As to quaternary structure, interacts with G2. Might be part of a transcription complex composed at least of G2, A18, and H5.

The protein resides in the virion. Functionally, DNA helicase which seems to act as a postreplicative transcription termination factor. Involved in ATP-dependent release of nascent RNA. Forms a stable complex with single-stranded DNA, and to a lesser extent RNA. In Camelus, this protein is Transcript termination protein A18.